The primary structure comprises 1196 residues: DNA polymerase beta (1196 aa).

Belongs to the DNA polymerase type-B family.

It carries out the reaction DNA(n) + a 2'-deoxyribonucleoside 5'-triphosphate = DNA(n+1) + diphosphate. In terms of biological role, DNA-directed DNA polymerase involved in viral DNA replication. The chain is DNA polymerase beta from African swine fever virus (isolate Pig/Kenya/KEN-50/1950) (ASFV).